We begin with the raw amino-acid sequence, 709 residues long: Bud site selection protein 14 (709 aa).

Ser-2 is modified (N-acetylserine). A disordered region spans residues 61–258 (DIINNRPTSG…DYQPLSPPRE (198 aa)). Polar residues-rich tracts occupy residues 62 to 74 (IINN…SKLT) and 89 to 107 (VTPT…NILS). 2 stretches are compositionally biased toward basic and acidic residues: residues 111-123 (EKGH…RDDD) and 131-150 (VEKH…KENS). Tyr-159 bears the Phosphotyrosine mark. Residues Ser-160 and Ser-162 each carry the phosphoserine modification. Thr-177 bears the Phosphothreonine mark. Phosphoserine is present on residues Ser-212 and Ser-222. Residues 212–226 (SEDEDEEENYSDDDD) are compositionally biased toward acidic residues. Residues 259 to 320 (LDPDKLYALY…PAEILETFPE (62 aa)) form the SH3 domain. A disordered region spans residues 334 to 367 (SSQSVASSDSKDDSISSGNKNQSDAESIIPTPAL). A phosphoserine mark is found at Ser-376, Ser-378, and Ser-401. Over residues 396 to 406 (DTSLDSNDDGG) the composition is skewed to acidic residues. Disordered stretches follow at residues 396 to 421 (DTSL…DNDK), 464 to 510 (NVKK…SDYD), 525 to 571 (ANGM…SSRA), and 600 to 680 (ASLG…PASK). Residues 470–504 (RQDNKNESEPKTSSSKDREDDYNANRYVGQEKSEP) show a composition bias toward basic and acidic residues. A Phosphoserine modification is found at Ser-507. Over residues 531 to 552 (SDSQNSLSTIGEFSPSSSEWTN) the composition is skewed to polar residues. The segment covering 553–569 (ESPSTPIVEESSSIPSS) has biased composition (low complexity). Positions 600–614 (ASLGSSGGMANQTDA) are enriched in polar residues. Residues 615–633 (EQPKEELEKHHSTPEEEKQ) are compositionally biased toward basic and acidic residues. Residues Ser-655, Ser-658, and Ser-670 each carry the phosphoserine modification. Residues 655-671 (SSASINSSLSGSRALSN) show a composition bias toward low complexity.

In terms of assembly, interacts with GLC7.

Functionally, important for bud site selection. Seems to be a regulatory subunit of the BUD14-GLC7 type-I phosphatase complex. The BUD14-GLC7 complex is necessary to regulate microtubule dynamics at the cortex and may function as a specific activator of the dynein complex. This Saccharomyces cerevisiae (strain ATCC 204508 / S288c) (Baker's yeast) protein is Bud site selection protein 14 (BUD14).